A 474-amino-acid polypeptide reads, in one-letter code: Ribosomal RNA small subunit methyltransferase F (474 aa).

S-adenosyl-L-methionine-binding positions include 119–125 (AAAPGSK), Glu-143, Asp-170, and Asp-188. Cys-241 functions as the Nucleophile in the catalytic mechanism.

It belongs to the class I-like SAM-binding methyltransferase superfamily. RsmB/NOP family.

It localises to the cytoplasm. It catalyses the reaction cytidine(1407) in 16S rRNA + S-adenosyl-L-methionine = 5-methylcytidine(1407) in 16S rRNA + S-adenosyl-L-homocysteine + H(+). Specifically methylates the cytosine at position 1407 (m5C1407) of 16S rRNA. The chain is Ribosomal RNA small subunit methyltransferase F from Shewanella oneidensis (strain ATCC 700550 / JCM 31522 / CIP 106686 / LMG 19005 / NCIMB 14063 / MR-1).